A 394-amino-acid polypeptide reads, in one-letter code: Enoyl-CoA delta isomerase 2 (394 aa).

Residues 1–38 constitute a mitochondrion transit peptide; that stretch reads MAMAYLAWRLARRSCPSSLQVTSFPVVQLHMNRTAMRA. Positions 39 to 124 constitute an ACB domain; the sequence is SQKDFENSMN…VSSLSPSLES (86 aa). Position 51 is an N6-acetyllysine; alternate (Lys-51). Lys-51 carries the N6-succinyllysine; alternate modification. Lys-55 carries the post-translational modification N6-succinyllysine. Residue Lys-62 is modified to N6-acetyllysine; alternate. Lys-62 bears the N6-succinyllysine; alternate mark. Residue 66 to 70 coordinates an acyl-CoA; it reads YALYK. N6-succinyllysine occurs at positions 70, 81, and 90. Position 92 is an N6-acetyllysine; alternate (Lys-92). Position 92 is an N6-succinyllysine; alternate (Lys-92). Lys-92 is a binding site for an acyl-CoA. The residue at position 101 (Ser-101) is a Phosphoserine. Tyr-111 contacts an acyl-CoA. Phosphoserine is present on Ser-119. The ECH-like stretch occupies residues 151 to 322; the sequence is TKIMFNRPKK…AQGLVTEVFP (172 aa). Lys-161 carries the N6-succinyllysine modification. Residue 198 to 202 participates in substrate binding; sequence SGNDL. Lys-289 bears the N6-succinyllysine mark. The Microbody targeting signal signature appears at 392–394; that stretch reads SKL.

It in the C-terminal section; belongs to the enoyl-CoA hydratase/isomerase family. Abundant in heart, skeletal muscle and liver. Expressed in CD34(+) T-cells and CD34(+) bone marrow cells.

Its subcellular location is the mitochondrion. The protein localises to the peroxisome matrix. It carries out the reaction a (3Z)-enoyl-CoA = a 4-saturated (2E)-enoyl-CoA. It catalyses the reaction (3Z)-octenoyl-CoA = (2E)-octenoyl-CoA. The catalysed reaction is a (3E)-enoyl-CoA = a 4-saturated (2E)-enoyl-CoA. The enzyme catalyses (2E)-tetradecenoyl-CoA = (3Z)-tetradecenoyl-CoA. It carries out the reaction (3E)-tetradecenoyl-CoA = (2E)-tetradecenoyl-CoA. It catalyses the reaction (3E)-octenoyl-CoA = (2E)-octenoyl-CoA. The catalysed reaction is (3E)-nonenoyl-CoA = (2E)-nonenoyl-CoA. The protein operates within lipid metabolism; fatty acid beta-oxidation. Functionally, able to isomerize both 3-cis and 3-trans double bonds into the 2-trans form in a range of enoyl-CoA species. Has a preference for 3-trans substrates. This chain is Enoyl-CoA delta isomerase 2 (ECI2), found in Homo sapiens (Human).